A 369-amino-acid polypeptide reads, in one-letter code: 3,7-dimethylxanthine N-methyltransferase TCS1 (369 aa).

Residue tyrosine 24 participates in S-adenosyl-L-homocysteine binding. A caffeine-binding site is contributed by threonine 31. S-adenosyl-L-homocysteine contacts are provided by cysteine 66, asparagine 71, aspartate 103, leucine 104, serine 138, and phenylalanine 139. Tyrosine 156, histidine 159, and tryptophan 160 together coordinate caffeine. Asparagine 177 is a Mg(2+) binding site. Arginine 225 contacts caffeine. Residues aspartate 263, phenylalanine 265, and asparagine 266 each contribute to the Mg(2+) site. Caffeine is bound at residue phenylalanine 321.

The protein belongs to the methyltransferase superfamily. Type-7 methyltransferase family. Mg(2+) is required as a cofactor. As to expression, expressed in young leaves and flowers.

It carries out the reaction 7-methylxanthine + S-adenosyl-L-methionine = theobromine + S-adenosyl-L-homocysteine + H(+). The catalysed reaction is theobromine + S-adenosyl-L-methionine = caffeine + S-adenosyl-L-homocysteine + H(+). It catalyses the reaction 1,7-dimethylxanthine + S-adenosyl-L-methionine = caffeine + S-adenosyl-L-homocysteine + H(+). Its pathway is alkaloid biosynthesis. In terms of biological role, involved in the biosynthesis of caffeine. Catalyzes the conversion of 7-methylxanthine (7mX) to theobromine and of theobromine to caffeine. Has 3-N- and 1-N-methylation activity. This is 3,7-dimethylxanthine N-methyltransferase TCS1 from Camellia sinensis (Tea plant).